We begin with the raw amino-acid sequence, 257 residues long: Large ribosomal subunit protein uL2 (257 aa).

The interval 207-257 (VDHPHGGGNHQHVGHPTTLKRSSPPGQKAGKVAARRTGLIRGGNKEGAADN) is disordered.

The protein belongs to the universal ribosomal protein uL2 family. In terms of assembly, component of the large ribosomal subunit.

Its subcellular location is the cytoplasm. Component of the large ribosomal subunit. The ribosome is a large ribonucleoprotein complex responsible for the synthesis of proteins in the cell. The protein is Large ribosomal subunit protein uL2 (RPL8) of Entamoeba histolytica (strain ATCC 30459 / HM-1:IMSS / ABRM).